The chain runs to 305 residues: Phosphoribosylaminoimidazole-succinocarboxamide synthase (305 aa).

The protein belongs to the SAICAR synthetase family.

It catalyses the reaction 5-amino-1-(5-phospho-D-ribosyl)imidazole-4-carboxylate + L-aspartate + ATP = (2S)-2-[5-amino-1-(5-phospho-beta-D-ribosyl)imidazole-4-carboxamido]succinate + ADP + phosphate + 2 H(+). It functions in the pathway purine metabolism; IMP biosynthesis via de novo pathway; 5-amino-1-(5-phospho-D-ribosyl)imidazole-4-carboxamide from 5-amino-1-(5-phospho-D-ribosyl)imidazole-4-carboxylate: step 1/2. This Albidiferax ferrireducens (strain ATCC BAA-621 / DSM 15236 / T118) (Rhodoferax ferrireducens) protein is Phosphoribosylaminoimidazole-succinocarboxamide synthase.